Reading from the N-terminus, the 98-residue chain is Large ribosomal subunit protein uL23 (98 aa).

This sequence belongs to the universal ribosomal protein uL23 family. In terms of assembly, part of the 50S ribosomal subunit. Contacts protein L29, and trigger factor when it is bound to the ribosome.

One of the early assembly proteins it binds 23S rRNA. One of the proteins that surrounds the polypeptide exit tunnel on the outside of the ribosome. Forms the main docking site for trigger factor binding to the ribosome. In Lactobacillus johnsonii (strain CNCM I-12250 / La1 / NCC 533), this protein is Large ribosomal subunit protein uL23.